The primary structure comprises 288 residues: 33 kDa chaperonin (288 aa).

2 disulfides stabilise this stretch: Cys-235/Cys-237 and Cys-268/Cys-271.

Belongs to the HSP33 family. In terms of processing, under oxidizing conditions two disulfide bonds are formed involving the reactive cysteines. Under reducing conditions zinc is bound to the reactive cysteines and the protein is inactive.

It is found in the cytoplasm. Its function is as follows. Redox regulated molecular chaperone. Protects both thermally unfolding and oxidatively damaged proteins from irreversible aggregation. Plays an important role in the bacterial defense system toward oxidative stress. The polypeptide is 33 kDa chaperonin (Streptococcus thermophilus (strain CNRZ 1066)).